A 419-amino-acid polypeptide reads, in one-letter code: Transcription termination factor Rho (419 aa).

Residues 48–123 (DIFGDGVLEI…LKVNEVNYDK (76 aa)) enclose the Rho RNA-BD domain. RNA-binding regions lie at residues 61-66 (GFGFLR), 78-80 (DIY), and 108-110 (ERY). ATP is bound by residues 169-174 (GRGQRG), 181-186 (KAGKTI), and R212. Residues 284–288 (VLTGG) are RNA-binding 2.

It belongs to the Rho family. Homohexamer. The homohexamer assembles into an open ring structure.

Facilitates transcription termination by a mechanism that involves Rho binding to the nascent RNA, activation of Rho's RNA-dependent ATPase activity, and release of the mRNA from the DNA template. The chain is Transcription termination factor Rho from Buchnera aphidicola subsp. Acyrthosiphon pisum (strain APS) (Acyrthosiphon pisum symbiotic bacterium).